Consider the following 501-residue polypeptide: Lysine--tRNA ligase (501 aa).

2 residues coordinate Mg(2+): E411 and E418.

It belongs to the class-II aminoacyl-tRNA synthetase family. Homodimer. Mg(2+) serves as cofactor.

It localises to the cytoplasm. It carries out the reaction tRNA(Lys) + L-lysine + ATP = L-lysyl-tRNA(Lys) + AMP + diphosphate. The chain is Lysine--tRNA ligase from Aliivibrio fischeri (strain ATCC 700601 / ES114) (Vibrio fischeri).